A 247-amino-acid chain; its full sequence is tRNA uridine(34) hydroxylase (247 aa).

One can recognise a Rhodanese domain in the interval 124 to 218 (TKQDVIVIDT…YLEDTQNKNN (95 aa)). C178 functions as the Cysteine persulfide intermediate in the catalytic mechanism.

This sequence belongs to the TrhO family.

The catalysed reaction is uridine(34) in tRNA + AH2 + O2 = 5-hydroxyuridine(34) in tRNA + A + H2O. Functionally, catalyzes oxygen-dependent 5-hydroxyuridine (ho5U) modification at position 34 in tRNAs. The chain is tRNA uridine(34) hydroxylase from Rickettsia africae (strain ESF-5).